Consider the following 561-residue polypeptide: uncharacterized protein (561 aa).

Positions 314 to 323 (ANNGSGDSSS) are enriched in low complexity. The interval 314–366 (ANNGSGDSSSTALNNESPNTTPKSRTFFSPKGHRRNSSHVSSLTSRSTKKPIT) is disordered. A compositionally biased stretch (polar residues) spans 324-340 (TALNNESPNTTPKSRTF). Position 514 is a phosphoserine (S514).

It is found in the cytoplasm. This is an uncharacterized protein from Saccharomyces cerevisiae (strain ATCC 204508 / S288c) (Baker's yeast).